The following is a 304-amino-acid chain: Tyrosine recombinase XerC (304 aa).

The region spanning 6-92 (NKLYLQAQAY…VLRQWFAYLV (87 aa)) is the Core-binding (CB) domain. The Tyr recombinase domain occupies 113–292 (HLPKNIDAER…DFQHLAKIYD (180 aa)). Catalysis depends on residues Arg-152, Lys-176, His-244, Arg-247, and His-270. Tyr-279 acts as the O-(3'-phospho-DNA)-tyrosine intermediate in catalysis.

This sequence belongs to the 'phage' integrase family. XerC subfamily. In terms of assembly, forms a cyclic heterotetrameric complex composed of two molecules of XerC and two molecules of XerD.

It is found in the cytoplasm. Functionally, site-specific tyrosine recombinase, which acts by catalyzing the cutting and rejoining of the recombining DNA molecules. The XerC-XerD complex is essential to convert dimers of the bacterial chromosome into monomers to permit their segregation at cell division. It also contributes to the segregational stability of plasmids. This Haemophilus ducreyi (strain 35000HP / ATCC 700724) protein is Tyrosine recombinase XerC.